Consider the following 136-residue polypeptide: Small ribosomal subunit protein uS9 (136 aa).

This sequence belongs to the universal ribosomal protein uS9 family.

The protein is Small ribosomal subunit protein uS9 of Borrelia turicatae (strain 91E135).